A 102-amino-acid polypeptide reads, in one-letter code: ATP-dependent Clp protease adapter protein ClpS (102 aa).

It belongs to the ClpS family. Binds to the N-terminal domain of the chaperone ClpA.

Involved in the modulation of the specificity of the ClpAP-mediated ATP-dependent protein degradation. The protein is ATP-dependent Clp protease adapter protein ClpS of Aromatoleum aromaticum (strain DSM 19018 / LMG 30748 / EbN1) (Azoarcus sp. (strain EbN1)).